Consider the following 272-residue polypeptide: Probable glutathione S-transferase DHAR2, chloroplastic (272 aa).

The N-terminal 57 residues, 1–57, are a transit peptide targeting the chloroplast; that stretch reads MAVLLRTTTSATTATSGGSSSATALLATTFRRGGRRLLLLPATRGSAPRRAALLTAR. The glutathione site is built by lysine 68 and aspartate 79. L-ascorbate-binding residues include lysine 68 and aspartate 79. Positions 70 to 148 constitute a GST N-terminal domain; that stretch reads SLTVPDRLGD…AIEEKYPEPS (79 aa). Cysteine 80 (nucleophile) is an active-site residue. Residues lysine 107, valine 120, serine 133, histidine 219, and tryptophan 266 each coordinate glutathione. The region spanning 126–272 is the GST C-terminal domain; that stretch reads EEQWVADSDV…IAGWRPKVMG (147 aa). Lysine 269 is an L-ascorbate binding site.

Belongs to the GST superfamily. DHAR family. In terms of assembly, monomer.

The protein resides in the plastid. It localises to the chloroplast. The enzyme catalyses RX + glutathione = an S-substituted glutathione + a halide anion + H(+). It catalyses the reaction L-dehydroascorbate + 2 glutathione = glutathione disulfide + L-ascorbate. Involved in ascorbate homeostasis. Maintains redox pools of ascorbate by recycling dihydroascorbate (DHA) to ascorbate. Involved in scavenging reactive oxygen species (ROS) under oxidative stresses. In Oryza sativa subsp. japonica (Rice), this protein is Probable glutathione S-transferase DHAR2, chloroplastic.